We begin with the raw amino-acid sequence, 230 residues long: Uracil-DNA glycosylase (230 aa).

Residue Asp-70 is the Proton acceptor of the active site.

Belongs to the uracil-DNA glycosylase (UDG) superfamily. UNG family.

The protein localises to the cytoplasm. It catalyses the reaction Hydrolyzes single-stranded DNA or mismatched double-stranded DNA and polynucleotides, releasing free uracil.. Functionally, excises uracil residues from the DNA which can arise as a result of misincorporation of dUMP residues by DNA polymerase or due to deamination of cytosine. The sequence is that of Uracil-DNA glycosylase from Pseudomonas putida (strain GB-1).